The following is a 97-amino-acid chain: Large ribosomal subunit protein uL23 (97 aa).

It belongs to the universal ribosomal protein uL23 family. Part of the 50S ribosomal subunit. Contacts protein L29, and trigger factor when it is bound to the ribosome.

In terms of biological role, one of the early assembly proteins it binds 23S rRNA. One of the proteins that surrounds the polypeptide exit tunnel on the outside of the ribosome. Forms the main docking site for trigger factor binding to the ribosome. The chain is Large ribosomal subunit protein uL23 from Brucella anthropi (strain ATCC 49188 / DSM 6882 / CCUG 24695 / JCM 21032 / LMG 3331 / NBRC 15819 / NCTC 12168 / Alc 37) (Ochrobactrum anthropi).